The chain runs to 485 residues: Homeobox protein unplugged (485 aa).

Disordered regions lie at residues 1-65 (MERP…QEQE), 114-157 (PAGH…DTRF), and 212-325 (GMAQ…RRTA). Over residues 54 to 64 (RDQEQEAEQEQ) the composition is skewed to acidic residues. Low complexity predominate over residues 114–128 (PAGHPAAQQPQAQAQ). Composition is skewed to polar residues over residues 223 to 234 (QAHSSPAKSGSH) and 254 to 267 (DSCSDISLTMSPRN). A compositionally biased stretch (acidic residues) spans 284–293 (DSEDCSDDEG). The segment covering 308–317 (SQGNGSSSNS) has biased composition (low complexity). Positions 319–378 (SRRRRTAFTSEQLLELEREFHAKKYLSLTERSQIATSLKLSEVQVKIWFQNRRAKWKRVK) form a DNA-binding region, homeobox.

As to expression, expressed in the neuroectodermal and mesectodermal cells at the ventral midline of stage 8 embryos, Subsequently, expression domains in the CNS widen and have their most anterior border in the posterior deutocerebrum. Oc/otd and unpg are mutual repressors at the interface of their brain-specific expression domains. Expression fades during germ band retraction and is then restricted to subset of cells by stage 14. Expressed in the founder cells of the cerebral branch within the first tracheal metamere. Outside the CNS, expression is seen in two clusters of ectodermal cells located laterally within the labial and first thoracic segments of stage 9 embryos. By stage 13, the expression is detected in a few cells close to the dorsal midline of the embryos.

The protein localises to the nucleus. Functionally, plays a regulatory role in neural branching of the tracheae: segment-specific aspects of these neural branching patterns appear to be generated by homeotic regulation of expression. May have a role with oc/otd in the postembryonic development of the brain. This Drosophila melanogaster (Fruit fly) protein is Homeobox protein unplugged.